Here is a 164-residue protein sequence, read N- to C-terminus: UPF0114 protein Sbal_0780 (164 aa).

The next 4 helical transmembrane spans lie at 15 to 35, 53 to 73, 109 to 129, and 136 to 156; these read IMAPIYLGLSLILFALGVKFF, LVLLTLSLIDITLVGGLIVMV, VAASIVAISSIHLLKVFMNAE, and IMWYLLIHITFVLSAFAMGYL.

Belongs to the UPF0114 family.

The protein localises to the cell membrane. This Shewanella baltica (strain OS155 / ATCC BAA-1091) protein is UPF0114 protein Sbal_0780.